A 150-amino-acid chain; its full sequence is Large ribosomal subunit protein bL9 (150 aa).

The protein belongs to the bacterial ribosomal protein bL9 family.

In terms of biological role, binds to the 23S rRNA. This chain is Large ribosomal subunit protein bL9, found in Janthinobacterium sp. (strain Marseille) (Minibacterium massiliensis).